Consider the following 643-residue polypeptide: Coiled-coil domain-containing protein 8 (643 aa).

Positions 93–124 are disordered; sequence VGTYDSSNGSDSELSDFDTSKVKGNRGSGKTR. 2 positions are modified to phosphoserine: Ser141 and Ser144. 5 disordered regions span residues 156-191, 206-492, 519-540, 553-577, and 603-643; these read RRGE…KGDR, QRVR…TPRA, IDSQ…NQRV, DQRE…ARKQ, and PRLP…EEQL. The span at 218 to 227 shows a compositional bias: polar residues; that stretch reads EVGQAQQSSI. Residues 230–247 show a composition bias toward basic and acidic residues; that stretch reads RAGEMRHSHTSPDLDDSS. Residues 248–259 show a composition bias toward polar residues; it reads RNTGDLSDQTLI. Residues 261–276 are compositionally biased toward basic residues; sequence RRWKPKIKWVSLRRCR. Low complexity-rich tracts occupy residues 294 to 399, 409 to 432, and 459 to 473; these read AAEN…AEAA, NPRT…EATA, and RVEA…AAAS. Over residues 528–537 the composition is skewed to polar residues; that stretch reads VNQSTGATEN. The PxLPxI/L motif; mediates interaction with ANKRA2 signature appears at 603 to 609; the sequence is PRLPTLP. A compositionally biased stretch (basic and acidic residues) spans 626 to 643; that stretch reads LRADTRADMEHREQEEQL.

Component of the 3M complex, composed of core components CUL7, CCDC8 and OBSL1. Interacts (via PxLPxI/L motif) with ANKRA2 (via ankyrin repeats); may link the 3M complex to histone deacetylases including HDAC4 and HDAC5.

The protein resides in the cytoplasm. It localises to the cytoskeleton. Its subcellular location is the microtubule organizing center. The protein localises to the centrosome. In terms of biological role, core component of the 3M complex, a complex required to regulate microtubule dynamics and genome integrity. It is unclear how the 3M complex regulates microtubules, it could act by controlling the level of a microtubule stabilizer. Required for localization of CUL7 to the centrosome. This Rattus norvegicus (Rat) protein is Coiled-coil domain-containing protein 8 (Ccdc8).